The following is a 275-amino-acid chain: Adenosylcobinamide-GDP ribazoletransferase (275 aa).

Transmembrane regions (helical) follow at residues 53–73 (WFVF…TISL), 113–133 (VGSF…LGVS), 144–164 (LPFT…LYFV), 204–224 (FACI…PYFL), 225–245 (LSLL…KRWI), and 253–273 (LGAV…FVWI).

The protein belongs to the CobS family. Requires Mg(2+) as cofactor.

The protein localises to the cell inner membrane. The enzyme catalyses alpha-ribazole + adenosylcob(III)inamide-GDP = adenosylcob(III)alamin + GMP + H(+). The catalysed reaction is alpha-ribazole 5'-phosphate + adenosylcob(III)inamide-GDP = adenosylcob(III)alamin 5'-phosphate + GMP + H(+). It participates in cofactor biosynthesis; adenosylcobalamin biosynthesis; adenosylcobalamin from cob(II)yrinate a,c-diamide: step 7/7. Its function is as follows. Joins adenosylcobinamide-GDP and alpha-ribazole to generate adenosylcobalamin (Ado-cobalamin). Also synthesizes adenosylcobalamin 5'-phosphate from adenosylcobinamide-GDP and alpha-ribazole 5'-phosphate. This chain is Adenosylcobinamide-GDP ribazoletransferase, found in Leptospira biflexa serovar Patoc (strain Patoc 1 / Ames).